A 72-amino-acid chain; its full sequence is Translation initiation factor IF-1 (72 aa).

Residues 1 to 72 form the S1-like domain; sequence MSKEEVLEFS…TKGRITYRYK (72 aa).

It belongs to the IF-1 family. As to quaternary structure, component of the 30S ribosomal translation pre-initiation complex which assembles on the 30S ribosome in the order IF-2 and IF-3, IF-1 and N-formylmethionyl-tRNA(fMet); mRNA recruitment can occur at any time during PIC assembly.

It is found in the cytoplasm. In terms of biological role, one of the essential components for the initiation of protein synthesis. Stabilizes the binding of IF-2 and IF-3 on the 30S subunit to which N-formylmethionyl-tRNA(fMet) subsequently binds. Helps modulate mRNA selection, yielding the 30S pre-initiation complex (PIC). Upon addition of the 50S ribosomal subunit IF-1, IF-2 and IF-3 are released leaving the mature 70S translation initiation complex. The protein is Translation initiation factor IF-1 of Bartonella quintana (strain Toulouse) (Rochalimaea quintana).